The following is a 1006-amino-acid chain: Probable beta-galactosidase A (1006 aa).

A signal peptide spans 1-18 (MKLLSVCAIALLAAQAAG). Residues tyrosine 96, asparagine 140, alanine 141, and glutamate 142 each contribute to the substrate site. Asparagine 156 carries an N-linked (GlcNAc...) asparagine glycan. Asparagine 199 is a binding site for substrate. Glutamate 200 functions as the Proton donor in the catalytic mechanism. Cysteine 205 and cysteine 206 are joined by a disulfide. Tyrosine 260 lines the substrate pocket. A disulfide bond links cysteine 266 and cysteine 315. Glutamate 298 serves as the catalytic Nucleophile. Tyrosine 364 serves as a coordination point for substrate. N-linked (GlcNAc...) asparagine glycosylation is found at asparagine 373, asparagine 402, asparagine 422, asparagine 622, asparagine 760, asparagine 777, and asparagine 914.

It belongs to the glycosyl hydrolase 35 family.

The protein resides in the secreted. It catalyses the reaction Hydrolysis of terminal non-reducing beta-D-galactose residues in beta-D-galactosides.. Cleaves beta-linked terminal galactosyl residues from gangliosides, glycoproteins, and glycosaminoglycans. The sequence is that of Probable beta-galactosidase A (lacA) from Aspergillus fumigatus (strain ATCC MYA-4609 / CBS 101355 / FGSC A1100 / Af293) (Neosartorya fumigata).